We begin with the raw amino-acid sequence, 104 residues long: uncharacterized protein (104 aa).

Positions 1–24 are disordered; the sequence is MISTEKSSDAVAMHCPSGDQHNSE.

This is an uncharacterized protein from Saccharomyces cerevisiae (strain ATCC 204508 / S288c) (Baker's yeast).